Consider the following 384-residue polypeptide: Endoglucanase (384 aa).

An N-terminal signal peptide occupies residues 1–25; sequence MTRRRLLHAGTLAGVAALLPAAALA. Residue E63 is the Proton donor of the active site. The Nucleophile role is filled by D124.

The protein belongs to the glycosyl hydrolase 8 (cellulase D) family.

The protein resides in the secreted. The enzyme catalyses Endohydrolysis of (1-&gt;4)-beta-D-glucosidic linkages in cellulose, lichenin and cereal beta-D-glucans.. It participates in glycan metabolism; bacterial cellulose biosynthesis. Functionally, hydrolyzes carboxymethylcellulose. The sequence is that of Endoglucanase (bcsZ) from Xanthomonas axonopodis pv. citri (strain 306).